Reading from the N-terminus, the 643-residue chain is Phosphomethylpyrimidine synthase (643 aa).

Substrate contacts are provided by residues Asn-248, Met-277, Tyr-306, His-342, 362–364, 403–406, and Glu-442; these read SRG and DGLR. His-446 contacts Zn(2+). Residue Tyr-469 participates in substrate binding. His-510 lines the Zn(2+) pocket. Cys-590, Cys-593, and Cys-598 together coordinate [4Fe-4S] cluster.

Belongs to the ThiC family. Homodimer. The cofactor is [4Fe-4S] cluster.

It carries out the reaction 5-amino-1-(5-phospho-beta-D-ribosyl)imidazole + S-adenosyl-L-methionine = 4-amino-2-methyl-5-(phosphooxymethyl)pyrimidine + CO + 5'-deoxyadenosine + formate + L-methionine + 3 H(+). It functions in the pathway cofactor biosynthesis; thiamine diphosphate biosynthesis. Its function is as follows. Catalyzes the synthesis of the hydroxymethylpyrimidine phosphate (HMP-P) moiety of thiamine from aminoimidazole ribotide (AIR) in a radical S-adenosyl-L-methionine (SAM)-dependent reaction. This chain is Phosphomethylpyrimidine synthase, found in Paraburkholderia phytofirmans (strain DSM 17436 / LMG 22146 / PsJN) (Burkholderia phytofirmans).